Reading from the N-terminus, the 1416-residue chain is DNA-directed RNA polymerase subunit beta' (1416 aa).

Zn(2+) contacts are provided by Cys60, Cys62, Cys75, and Cys78. Residues Asp449, Asp451, and Asp453 each contribute to the Mg(2+) site. Zn(2+)-binding residues include Cys781, Cys855, Cys862, and Cys865.

This sequence belongs to the RNA polymerase beta' chain family. The RNAP catalytic core consists of 2 alpha, 1 beta, 1 beta' and 1 omega subunit. When a sigma factor is associated with the core the holoenzyme is formed, which can initiate transcription. Requires Mg(2+) as cofactor. The cofactor is Zn(2+).

The catalysed reaction is RNA(n) + a ribonucleoside 5'-triphosphate = RNA(n+1) + diphosphate. Functionally, DNA-dependent RNA polymerase catalyzes the transcription of DNA into RNA using the four ribonucleoside triphosphates as substrates. In Treponema pallidum (strain Nichols), this protein is DNA-directed RNA polymerase subunit beta'.